The following is a 182-amino-acid chain: Crossover junction endodeoxyribonuclease RuvC (182 aa).

Active-site residues include Asp-7, Glu-69, and Asp-141. Mg(2+) is bound by residues Asp-7, Glu-69, and Asp-141.

The protein belongs to the RuvC family. In terms of assembly, homodimer which binds Holliday junction (HJ) DNA. The HJ becomes 2-fold symmetrical on binding to RuvC with unstacked arms; it has a different conformation from HJ DNA in complex with RuvA. In the full resolvosome a probable DNA-RuvA(4)-RuvB(12)-RuvC(2) complex forms which resolves the HJ. Requires Mg(2+) as cofactor.

The protein localises to the cytoplasm. The enzyme catalyses Endonucleolytic cleavage at a junction such as a reciprocal single-stranded crossover between two homologous DNA duplexes (Holliday junction).. The RuvA-RuvB-RuvC complex processes Holliday junction (HJ) DNA during genetic recombination and DNA repair. Endonuclease that resolves HJ intermediates. Cleaves cruciform DNA by making single-stranded nicks across the HJ at symmetrical positions within the homologous arms, yielding a 5'-phosphate and a 3'-hydroxyl group; requires a central core of homology in the junction. The consensus cleavage sequence is 5'-(A/T)TT(C/G)-3'. Cleavage occurs on the 3'-side of the TT dinucleotide at the point of strand exchange. HJ branch migration catalyzed by RuvA-RuvB allows RuvC to scan DNA until it finds its consensus sequence, where it cleaves and resolves the cruciform DNA. The polypeptide is Crossover junction endodeoxyribonuclease RuvC (Polaromonas sp. (strain JS666 / ATCC BAA-500)).